A 702-amino-acid chain; its full sequence is Elongation factor G (702 aa).

The tr-type G domain maps to 8-290; it reads TRYRNIGISA…AVIEYLPAPT (283 aa). Residues 17–24, 88–92, and 142–145 each bind GTP; these read AHIDAGKT, DTPGH, and NKMD.

It belongs to the TRAFAC class translation factor GTPase superfamily. Classic translation factor GTPase family. EF-G/EF-2 subfamily.

Its subcellular location is the cytoplasm. Catalyzes the GTP-dependent ribosomal translocation step during translation elongation. During this step, the ribosome changes from the pre-translocational (PRE) to the post-translocational (POST) state as the newly formed A-site-bound peptidyl-tRNA and P-site-bound deacylated tRNA move to the P and E sites, respectively. Catalyzes the coordinated movement of the two tRNA molecules, the mRNA and conformational changes in the ribosome. The sequence is that of Elongation factor G from Erwinia tasmaniensis (strain DSM 17950 / CFBP 7177 / CIP 109463 / NCPPB 4357 / Et1/99).